Consider the following 256-residue polypeptide: Probable sulfite/organosulfonate exporter TauE (256 aa).

Helical transmembrane passes span 5–25 (LLLP…FQTV), 33–53 (IVMG…AAVV), 76–96 (AVAA…LVLE), 103–123 (ATLL…SAAL), 142–162 (VFGG…IFQF), 172–190 (IRCA…RTLF), 199–219 (AAVC…TLLG), and 236–256 (FGVL…AWVL).

It belongs to the 4-toluene sulfonate uptake permease (TSUP) (TC 2.A.102) family.

It is found in the cell inner membrane. In terms of biological role, could be a sulfite/organosulfonate exporter with a wide substrate range, including 3-sulfolactate and 3-sulfopyruvate. The chain is Probable sulfite/organosulfonate exporter TauE from Cupriavidus necator (strain ATCC 17699 / DSM 428 / KCTC 22496 / NCIMB 10442 / H16 / Stanier 337) (Ralstonia eutropha).